Reading from the N-terminus, the 275-residue chain is MNSLPRPDIGPFADTPEKRWVGVSFGAAAVGYDGVAALQREVGESLLAGIRHLGPPPARMLDLGAGTGHFSGLLVAAFPTAECLALDIAEGMLRFLRSHRPGADGMGLVVGDAEALPLADESVDLIFSNMAFQWCERLDRAISECCRVLRPGGRLAFSTFGEATLAELRMAWRAVDGYTHVNAFATRRSVEQELRAQGFTKIRLDARTLRRGYPSVLALMKELKALGARNLTRNRPRHLLSRHTLERVSEAYGRLPGMASAVTASFEVLTALVEK.

This sequence belongs to the methyltransferase superfamily.

The catalysed reaction is malonyl-[ACP] + S-adenosyl-L-methionine = malonyl-[ACP] methyl ester + S-adenosyl-L-homocysteine. It functions in the pathway cofactor biosynthesis; biotin biosynthesis. Converts the free carboxyl group of a malonyl-thioester to its methyl ester by transfer of a methyl group from S-adenosyl-L-methionine (SAM). It allows to synthesize pimeloyl-ACP via the fatty acid synthetic pathway. In Methylococcus capsulatus (strain ATCC 33009 / NCIMB 11132 / Bath), this protein is Malonyl-[acyl-carrier protein] O-methyltransferase.